The chain runs to 80 residues: Serine protease inhibitor Kazal-type 1 (80 aa).

Positions 1–23 (MKVAVIFLLSALALLSLAGNTFS) are cleaved as a signal peptide. A Kazal-like domain is found at 27–80 (TGKEASCHDAVAGCPRIYDPVCGTDGITYANECVLCFENRKRIEPVLIRKGGPC). 3 cysteine pairs are disulfide-bonded: Cys-33–Cys-62, Cys-40–Cys-59, and Cys-48–Cys-80.

In the genital tract, expressed only in male accessory glands including seminal vesicle, coagulating gland and prostate.

Its subcellular location is the secreted. Serine protease inhibitor which exhibits anti-trypsin activity. In the pancreas, protects against trypsin-catalyzed premature activation of zymogens. In terms of biological role, in the male reproductive tract, binds to sperm heads where it modulates sperm capacitance by inhibiting calcium uptake and nitrogen oxide (NO) production. This is Serine protease inhibitor Kazal-type 1 from Mus musculus (Mouse).